The following is a 218-amino-acid chain: Mitochondrial fission factor (218 aa).

Residues 1 to 198 lie on the Cytoplasmic side of the membrane; the sequence is MAEISRIQYE…ENKERAKREM (198 aa). Thr89 bears the Phosphothreonine mark. Phosphoserine occurs at positions 129, 131, 146, and 171. The stretch at 167-198 forms a coiled coil; the sequence is VDAASLRRQIIKLNRRLQLLEEENKERAKREM. Residues 199–216 traverse the membrane as a helical; Anchor for type IV membrane protein segment; the sequence is VMYSITVAFWLLNSWLWF. The Mitochondrial intermembrane segment spans residues 217–218; that stretch reads RR.

It belongs to the Tango11 family. In terms of assembly, homodimer. Interacts with DNM1L. Interacts with C11orf65/MFI; the interaction inhibits MFF interaction with DNM1L.

It localises to the mitochondrion outer membrane. Its subcellular location is the peroxisome. The protein resides in the cytoplasmic vesicle. The protein localises to the secretory vesicle. It is found in the synaptic vesicle. Functionally, plays a role in mitochondrial and peroxisomal fission. Promotes the recruitment and association of the fission mediator dynamin-related protein 1 (DNM1L) to the mitochondrial surface. May be involved in regulation of synaptic vesicle membrane dynamics by recruitment of DNM1L to clathrin-containing vesicles. The protein is Mitochondrial fission factor (MFF) of Bos taurus (Bovine).